Here is a 195-residue protein sequence, read N- to C-terminus: MKVYLGGEAEVKILENVVVKTRIPKRYRIKELDRELRLRRTKMEAKIISAARRAGVPTPIVLDVEEDTIVMERIYGEAVKDVMSKDVSREVGRMAAKLHRAGIIHGDITPMNLILSNSRIYFVDFGLAFFDNKVEPMGVDVHVYFESLKASFENWERLRDAFIEGYLAEGGSEEVIERAKEIEERGRYVERVSMG.

Positions 1-195 (MKVYLGGEAE…GRYVERVSMG (195 aa)) constitute a Protein kinase domain. Lysine 12 provides a ligand contact to ATP. Aspartate 107 serves as the catalytic Proton acceptor.

This sequence belongs to the protein kinase superfamily. Tyr protein kinase family. BUD32 subfamily.

The protein resides in the cytoplasm. The enzyme catalyses L-seryl-[protein] + ATP = O-phospho-L-seryl-[protein] + ADP + H(+). It catalyses the reaction L-threonyl-[protein] + ATP = O-phospho-L-threonyl-[protein] + ADP + H(+). Could be involved in the formation of a threonylcarbamoyl group on adenosine at position 37 (t(6)A37) in tRNAs that read codons beginning with adenine. This chain is Probable serine/threonine-protein kinase BUD32 homolog, found in Archaeoglobus fulgidus (strain ATCC 49558 / DSM 4304 / JCM 9628 / NBRC 100126 / VC-16).